A 522-amino-acid polypeptide reads, in one-letter code: DNA-binding protein Ikaros (522 aa).

Disordered stretches follow at residues 1–48 (MEME…HNNR) and 96–115 (AKVNGSHAGGPDSKGPYSSA). C2H2-type zinc fingers lie at residues 125–147 (LKCDICGIVCIGPNVLMVHKRSH), 153–175 (FQCTQCGASFTQKGNLLRHIKLH), 181–203 (FKCHLCNYACRRRDALSGHLRTH), and 209–232 (HKCAYCGRSYKQRSSLEEHKERCH). Positions 379-406 (KSASSEKDGSPSHSGQDSTDTESNNEEK) are disordered. 2 C2H2-type zinc fingers span residues 468–490 (YRCEHCRILFLDHVMYTIHMGCH) and 496–520 (FECNLCGHRSQDRYEFSSHMTRGEH).

It belongs to the Ikaros C2H2-type zinc-finger protein family. In terms of tissue distribution, expression mainly limited to thymus, spleen and pronephros. Very low expression in liver. No expression in testis, brain, eye and muscle.

Its subcellular location is the nucleus. Functionally, binds and activates the enhancer (delta-A element) of the CD3-delta gene. Functions in the specification and the maturation of the T-lymphocyte. Also interacts with a critical control element in the TDT (terminal deoxynucleotidyltransferase) promoter as well as with the promoters for other genes expressed during early stages of B- and T-cell development. Function is isoform-specific and is modulated by dominant-negative inactive isoforms. In Oncorhynchus mykiss (Rainbow trout), this protein is DNA-binding protein Ikaros (ikzf1).